Here is an 87-residue protein sequence, read N- to C-terminus: Small ribosomal subunit protein uS15c (87 aa).

Belongs to the universal ribosomal protein uS15 family. Part of the 30S ribosomal subunit.

The protein resides in the plastid. The protein localises to the chloroplast. This is Small ribosomal subunit protein uS15c (rps15) from Solanum tuberosum (Potato).